The sequence spans 93 residues: Large ribosomal subunit protein eL37A (93 aa).

Positions 19, 22, 34, and 37 each coordinate Zn(2+). Residues 19 to 37 form a C4-type zinc finger; sequence CRRCGRSSYHIQKSTCAQC.

This sequence belongs to the eukaryotic ribosomal protein eL37 family. Requires Zn(2+) as cofactor.

In terms of biological role, binds to the 23S rRNA. This Drosophila melanogaster (Fruit fly) protein is Large ribosomal subunit protein eL37A.